A 152-amino-acid chain; its full sequence is Protein-export protein SecB (152 aa).

The protein belongs to the SecB family. Homotetramer, a dimer of dimers. One homotetramer interacts with 1 SecA dimer.

The protein resides in the cytoplasm. Its function is as follows. One of the proteins required for the normal export of preproteins out of the cell cytoplasm. It is a molecular chaperone that binds to a subset of precursor proteins, maintaining them in a translocation-competent state. It also specifically binds to its receptor SecA. The sequence is that of Protein-export protein SecB from Rickettsia felis (strain ATCC VR-1525 / URRWXCal2) (Rickettsia azadi).